The following is a 238-amino-acid chain: Ribonuclease PH (238 aa).

Phosphate contacts are provided by residues Arg86 and 124–126 (GTR).

It belongs to the RNase PH family. As to quaternary structure, homohexameric ring arranged as a trimer of dimers.

It catalyses the reaction tRNA(n+1) + phosphate = tRNA(n) + a ribonucleoside 5'-diphosphate. Functionally, phosphorolytic 3'-5' exoribonuclease that plays an important role in tRNA 3'-end maturation. Removes nucleotide residues following the 3'-CCA terminus of tRNAs; can also add nucleotides to the ends of RNA molecules by using nucleoside diphosphates as substrates, but this may not be physiologically important. Probably plays a role in initiation of 16S rRNA degradation (leading to ribosome degradation) during starvation. This chain is Ribonuclease PH, found in Chelativorans sp. (strain BNC1).